The chain runs to 260 residues: MADS-box transcription factor 29 (260 aa).

Residues 1–61 form the MADS-box domain; the sequence is MGRGKIEIKR…GKMFEYCSPT (61 aa). The K-box domain occupies 85–175; sequence DQQIFVEMTR…CRMINENHHQ (91 aa).

In terms of tissue distribution, expressed in developing seeds.

The protein resides in the nucleus. Probable transcription factor. The polypeptide is MADS-box transcription factor 29 (MADS29) (Oryza sativa subsp. japonica (Rice)).